A 260-amino-acid polypeptide reads, in one-letter code: tRNA pseudouridine synthase C (260 aa).

D54 is an active-site residue.

This sequence belongs to the pseudouridine synthase RluA family.

It catalyses the reaction uridine(65) in tRNA = pseudouridine(65) in tRNA. In terms of biological role, responsible for synthesis of pseudouridine from uracil-65 in transfer RNAs. This Escherichia coli O6:H1 (strain CFT073 / ATCC 700928 / UPEC) protein is tRNA pseudouridine synthase C (truC).